The primary structure comprises 86 residues: Large ribosomal subunit protein bL31B (86 aa).

The protein belongs to the bacterial ribosomal protein bL31 family. Type B subfamily. Part of the 50S ribosomal subunit.

The polypeptide is Large ribosomal subunit protein bL31B (Vibrio parahaemolyticus serotype O3:K6 (strain RIMD 2210633)).